The primary structure comprises 708 residues: MGIEGVSTYLKSGNMDTISAPPGFVSQTSFVLRNVPRDKESPRSVSRQEQTTGFGTDDKDSCNMFLKSRPWIVHGHTIPSSEALRPKKTEVRRRRPLKVSETKVLEEAPVFNPTEEEFRDTLSYISSLRDRAEPYGICCVVPPPSWKPPCLLKEKQIWEASTFFPQVQLFGIQTENRKIKKEVDADSNDAASEGVQLCRVERGPGYTLKSFKNFADTYKKSHFGMKDEVLGSENSSPSLKPNELIVADIEKEYRQIVESPLIEIGVLYGNDLDTATFGSGFPLSAPSESSKYSSGWNLNSTAKLPGSLLSLEDCESVCVPRLSVGMCLSSQFWKSEKERLYSLCYLHVGAPRVWYSVAGCHRSKFKAAMKSFILEMSGEQPKKSHNPVMMMSPYQLSVEGIPVTRCVQHPGQYVIIFPGSYYSAFDCGFNCLEKANFAPLDWLPHGDIAVQVNQEMSKTSLISYDKLLFSAAREAVKCLKEYGLSKKNTACYTRWNDSCGTDGLFSNIIKSRIKLEKNRREFLISSLESQRMDKSYDAVNKRECCVCLGDLYLSAVNCSCSANRYSCLNHMRKLCACPCDRKSFLYRYTMDELNLLVEALEGKKLSSMFRWAGIDQKFCASPATTSSKPEEDKGKETDEVTPCNITRKDVAAGTKDQTRVKARSLADILNVKDGNNDAKETLESCSKKSNRPCDNDSSEANAPKKQKQ.

Positions 35–59 (VPRDKESPRSVSRQEQTTGFGTDDK) are disordered. Polar residues predominate over residues 43-54 (RSVSRQEQTTGF). The region spanning 108 to 149 (APVFNPTEEEFRDTLSYISSLRDRAEPYGICCVVPPPSWKPP) is the JmjN domain. Residues 293 to 454 (SSGWNLNSTA…HGDIAVQVNQ (162 aa)) form the JmjC domain. Zn(2+) is bound by residues cysteine 544, cysteine 547, cysteine 558, cysteine 560, cysteine 567, histidine 570, cysteine 575, and cysteine 577. The segment at 544-581 (CCVCLGDLYLSAVNCSCSANRYSCLNHMRKLCACPCDR) adopts an RING-type; degenerate zinc-finger fold. The short motif at 646–653 (TRKDVAAG) is the Nuclear localization signal element. Positions 678–694 (AKETLESCSKKSNRPCD) are enriched in basic and acidic residues. The disordered stretch occupies residues 678–708 (AKETLESCSKKSNRPCDNDSSEANAPKKQKQ).

This sequence belongs to the JARID1 histone demethylase family. As to expression, expressed in inflorescences, roots, siliques, leaves and stems.

It is found in the nucleus. This chain is Probable inactive lysine-specific demethylase JMJ19, found in Arabidopsis thaliana (Mouse-ear cress).